Here is a 763-residue protein sequence, read N- to C-terminus: Phosphoglycerol transferase I (763 aa).

4 helical membrane passes run 1-21, 26-46, 77-97, and 108-128; these read MSEL…AWKA, WWFA…ITLF, ILPG…LGWI, and FGYS…SPAF.

The protein belongs to the OpgB family.

Its subcellular location is the cell inner membrane. The enzyme catalyses a phosphatidylglycerol + a membrane-derived-oligosaccharide D-glucose = a 1,2-diacyl-sn-glycerol + a membrane-derived-oligosaccharide 6-(glycerophospho)-D-glucose.. It functions in the pathway glycan metabolism; osmoregulated periplasmic glucan (OPG) biosynthesis. In terms of biological role, transfers a phosphoglycerol residue from phosphatidylglycerol to the membrane-bound nascent glucan backbones. In Escherichia coli O7:K1 (strain IAI39 / ExPEC), this protein is Phosphoglycerol transferase I.